A 332-amino-acid polypeptide reads, in one-letter code: Long form salivary protein D7L1 (332 aa).

Residues 1–21 form the signal peptide; that stretch reads MHSPKSFLLLAVVFVALRVTA. 2 disulfide bridges follow: Cys-40–Cys-77 and Cys-73–Cys-133. Leukotriene E4 is bound at residue Trp-61. Position 176 (Lys-176) interacts with leukotriene E4. Disulfide bonds link Cys-184-Cys-219, Cys-200-Cys-331, and Cys-259-Cys-278. Noradrenaline-binding residues include Glu-185 and Arg-203. The noradrenaline site is built by Asp-294 and Glu-297.

Belongs to the PBP/GOBP family. In terms of tissue distribution, female mosquito salivary gland (at protein level).

The protein localises to the secreted. In terms of biological role, modulates blood feeding of female mosquitoes on vertebrate species by binding and sequestering different mediators involved in the host response, such as biogenic amines and eicosanoids. Binds dopamine, serotonin, histamine, tryptamine, adrenaline, noradrenaline, leukotriene B4, leukotriene C4, leukotriene D4, leukotriene E4 and U-46619, a stable analog of thromboxane A2. Inhibits platelet aggregation induced by serotonin and low doses of thromboxane A2 analog U-46619 but not by high doses of U-46619, collagen or ADP. Prevents leukocyte recruitment. The polypeptide is Long form salivary protein D7L1 (Aedes albopictus (Asian tiger mosquito)).